The following is a 300-amino-acid chain: Energy-coupling factor transporter ATP-binding protein EcfA2 (300 aa).

The 256-residue stretch at Ile3–Leu258 folds into the ABC transporter domain. ATP is bound at residue Gly40 to Thr47.

The protein belongs to the ABC transporter superfamily. Energy-coupling factor EcfA family. Forms a stable energy-coupling factor (ECF) transporter complex composed of 2 membrane-embedded substrate-binding proteins (S component), 2 ATP-binding proteins (A component) and 2 transmembrane proteins (T component).

The protein localises to the cell membrane. Its function is as follows. ATP-binding (A) component of a common energy-coupling factor (ECF) ABC-transporter complex. Unlike classic ABC transporters this ECF transporter provides the energy necessary to transport a number of different substrates. This chain is Energy-coupling factor transporter ATP-binding protein EcfA2, found in Mesomycoplasma hyopneumoniae (strain 7448) (Mycoplasma hyopneumoniae).